The sequence spans 283 residues: Protoheme IX farnesyltransferase (283 aa).

Transmembrane regions (helical) follow at residues Ile-13–Leu-33, Gly-35–Leu-55, Ile-90–Val-110, Leu-156–Leu-176, Met-208–Ala-228, Trp-230–Phe-250, and Val-262–Phe-282.

Belongs to the UbiA prenyltransferase family. Protoheme IX farnesyltransferase subfamily.

The protein resides in the cell inner membrane. The enzyme catalyses heme b + (2E,6E)-farnesyl diphosphate + H2O = Fe(II)-heme o + diphosphate. It participates in porphyrin-containing compound metabolism; heme O biosynthesis; heme O from protoheme: step 1/1. In terms of biological role, converts heme B (protoheme IX) to heme O by substitution of the vinyl group on carbon 2 of heme B porphyrin ring with a hydroxyethyl farnesyl side group. This is Protoheme IX farnesyltransferase from Salinibacter ruber (strain DSM 13855 / M31).